The following is a 246-amino-acid chain: E3 ubiquitin ligase TRIM40 (246 aa).

The RING-type zinc finger occupies 12-55; that stretch reads CPICLDPLKEAVSTDCRHLFCRMCLTQHMDKASVSGILSCPVCR. The B box-type zinc-finger motif lies at 64–105; sequence GDNYICHTHQKRVRRFCEASGHLLCEECLQSPEHQSHTELSI. Zn(2+) is bound by residues C69, H72, C91, and H97. A coiled-coil region spans residues 105–170; sequence IENAISHYKE…DQTKEQLKAL (66 aa).

This sequence belongs to the TRIM/RBCC family. Interacts with NEDD8.

The enzyme catalyses S-ubiquitinyl-[E2 ubiquitin-conjugating enzyme]-L-cysteine + [acceptor protein]-L-lysine = [E2 ubiquitin-conjugating enzyme]-L-cysteine + N(6)-ubiquitinyl-[acceptor protein]-L-lysine.. Its function is as follows. E3 ubiquitin-protein ligase that plays a role in the limitation of the innate immune response. Mediates inhibition of the RLR signaling pathway by ubiquitinating RIGI and IFIH1 receptors, leading to their proteasomal degradation. Also promotes the neddylation of IKBKG/NEMO, stabilizing NFKBIA, and thereby inhibiting of NF-kappa-B nuclear translocation and activation. In Mus musculus (Mouse), this protein is E3 ubiquitin ligase TRIM40 (Trim40).